A 312-amino-acid polypeptide reads, in one-letter code: tRNA-cytidine(32) 2-sulfurtransferase (312 aa).

The PP-loop motif signature appears at 48–53; the sequence is SGGKDS. [4Fe-4S] cluster-binding residues include cysteine 123, cysteine 126, and cysteine 214.

It belongs to the TtcA family. In terms of assembly, homodimer. Mg(2+) serves as cofactor. The cofactor is [4Fe-4S] cluster.

The protein resides in the cytoplasm. It catalyses the reaction cytidine(32) in tRNA + S-sulfanyl-L-cysteinyl-[cysteine desulfurase] + AH2 + ATP = 2-thiocytidine(32) in tRNA + L-cysteinyl-[cysteine desulfurase] + A + AMP + diphosphate + H(+). It participates in tRNA modification. In terms of biological role, catalyzes the ATP-dependent 2-thiolation of cytidine in position 32 of tRNA, to form 2-thiocytidine (s(2)C32). The sulfur atoms are provided by the cysteine/cysteine desulfurase (IscS) system. The chain is tRNA-cytidine(32) 2-sulfurtransferase from Mannheimia succiniciproducens (strain KCTC 0769BP / MBEL55E).